Consider the following 813-residue polypeptide: DNA ligase (813 aa).

Residues 41–45 (DAEYD), 90–91 (SI), and E127 each bind NAD(+). Catalysis depends on K129, which acts as the N6-AMP-lysine intermediate. Positions 150, 189, 307, and 331 each coordinate NAD(+). Residues C440, C443, C458, and C464 each coordinate Zn(2+). Positions 729 to 813 (AEEGALSGKT…LLQNPPGDSA (85 aa)) constitute a BRCT domain.

Belongs to the NAD-dependent DNA ligase family. LigA subfamily. Mg(2+) is required as a cofactor. Requires Mn(2+) as cofactor.

The enzyme catalyses NAD(+) + (deoxyribonucleotide)n-3'-hydroxyl + 5'-phospho-(deoxyribonucleotide)m = (deoxyribonucleotide)n+m + AMP + beta-nicotinamide D-nucleotide.. Functionally, DNA ligase that catalyzes the formation of phosphodiester linkages between 5'-phosphoryl and 3'-hydroxyl groups in double-stranded DNA using NAD as a coenzyme and as the energy source for the reaction. It is essential for DNA replication and repair of damaged DNA. This is DNA ligase from Ralstonia nicotianae (strain ATCC BAA-1114 / GMI1000) (Ralstonia solanacearum).